The primary structure comprises 316 residues: Adenine deaminase (316 aa).

Positions 14, 16, and 194 each coordinate Zn(2+). Glutamate 197 serves as the catalytic Proton donor. Position 275 (aspartate 275) interacts with Zn(2+). Aspartate 276 contacts substrate.

Belongs to the metallo-dependent hydrolases superfamily. Adenosine and AMP deaminases family. Adenine deaminase type 2 subfamily. Zn(2+) serves as cofactor.

It catalyses the reaction adenine + H2O + H(+) = hypoxanthine + NH4(+). Functionally, catalyzes the hydrolytic deamination of adenine to hypoxanthine. Plays an important role in the purine salvage pathway and in nitrogen catabolism. This chain is Adenine deaminase, found in Pseudomonas entomophila (strain L48).